Reading from the N-terminus, the 185-residue chain is Ribosome-recycling factor (185 aa).

It belongs to the RRF family.

Its subcellular location is the cytoplasm. Responsible for the release of ribosomes from messenger RNA at the termination of protein biosynthesis. May increase the efficiency of translation by recycling ribosomes from one round of translation to another. The polypeptide is Ribosome-recycling factor (Francisella tularensis subsp. tularensis (strain FSC 198)).